A 520-amino-acid chain; its full sequence is Leucine aminopeptidase 1 (520 aa).

Residues Lys-288 and Asp-293 each coordinate Mn(2+). Residue Lys-300 is part of the active site. 3 residues coordinate Mn(2+): Asp-313, Asp-373, and Glu-375. Arg-377 is a catalytic residue.

This sequence belongs to the peptidase M17 family. As to quaternary structure, homohexamer (dimer of homotrimers). It depends on Mn(2+) as a cofactor.

It localises to the cytoplasm. It catalyses the reaction Release of an N-terminal amino acid, Xaa-|-Yaa-, in which Xaa is preferably Leu, but may be other amino acids including Pro although not Arg or Lys, and Yaa may be Pro. Amino acid amides and methyl esters are also readily hydrolyzed, but rates on arylamides are exceedingly low.. It carries out the reaction Release of N-terminal proline from a peptide.. In terms of biological role, presumably involved in the processing and regular turnover of intracellular proteins. Catalyzes the removal of unsubstituted N-terminal amino acids from various peptides. Possesses leucine aminopeptidase activity against the model substrate leucine-amido methyl coumarin. Possesses Cys-Gly dipeptidase activity. In addition, can cleave Cys-Leu and Leu-Cys dipeptides. Functionally, functions as a molecular chaperone to protect proteins from heat-induced damage. The protein is Leucine aminopeptidase 1 of Arabidopsis thaliana (Mouse-ear cress).